Reading from the N-terminus, the 226-residue chain is PKHD-type hydroxylase PiuC (226 aa).

The region spanning 78–178 (KVFPPLFNCY…RYASFFWTQS (101 aa)) is the Fe2OG dioxygenase domain. 3 residues coordinate Fe cation: H96, D98, and H159. R169 contacts 2-oxoglutarate.

Fe(2+) is required as a cofactor. Requires L-ascorbate as cofactor.

This chain is PKHD-type hydroxylase PiuC (piuC), found in Pseudomonas aeruginosa (strain ATCC 15692 / DSM 22644 / CIP 104116 / JCM 14847 / LMG 12228 / 1C / PRS 101 / PAO1).